The following is a 355-amino-acid chain: Protein MGF 360-3L (355 aa).

The ANK repeat unit spans residues 60–92 (KLNTALVLAVKENNYDLIVLFTEWGANINYALL).

Belongs to the asfivirus MGF 360 family.

Its function is as follows. Plays a role in virus cell tropism, and may be required for efficient virus replication in macrophages. This is Protein MGF 360-3L from Ornithodoros (relapsing fever ticks).